The sequence spans 69 residues: MSKIKGNVKWFNESKGFGFITPEDGSKDVFVHFSAIQSNGFKTLAEGQSVEFEITEGAKGPSAANVISL.

The 61-residue stretch at 6-66 (GNVKWFNESK…GAKGPSAANV (61 aa)) folds into the CSD domain.

The protein resides in the cytoplasm. This Buchnera aphidicola subsp. Acyrthosiphon pisum (strain APS) (Acyrthosiphon pisum symbiotic bacterium) protein is Cold shock-like protein CspE (cspE).